We begin with the raw amino-acid sequence, 98 residues long: NADH-ubiquinone oxidoreductase chain 4L (98 aa).

Transmembrane regions (helical) follow at residues 1–21 (MIPT…GMLT), 27–47 (VASL…TTLI), and 61–81 (IILL…LISI).

Belongs to the complex I subunit 4L family. In terms of assembly, core subunit of respiratory chain NADH dehydrogenase (Complex I) which is composed of 45 different subunits.

It is found in the mitochondrion inner membrane. The enzyme catalyses a ubiquinone + NADH + 5 H(+)(in) = a ubiquinol + NAD(+) + 4 H(+)(out). In terms of biological role, core subunit of the mitochondrial membrane respiratory chain NADH dehydrogenase (Complex I) which catalyzes electron transfer from NADH through the respiratory chain, using ubiquinone as an electron acceptor. Part of the enzyme membrane arm which is embedded in the lipid bilayer and involved in proton translocation. The sequence is that of NADH-ubiquinone oxidoreductase chain 4L (MT-ND4L) from Macaca nigra (Celebes black macaque).